A 306-amino-acid polypeptide reads, in one-letter code: Oxygen-dependent coproporphyrinogen-III oxidase (306 aa).

Serine 99 is a binding site for substrate. A divalent metal cation is bound by residues histidine 103 and histidine 113. Histidine 113 serves as the catalytic Proton donor. 115–117 (NVR) serves as a coordination point for substrate. A divalent metal cation-binding residues include histidine 152 and histidine 182. The interval 247-282 (YVEFNLVFDRGTLFGLQSGGRTESILMSMPPVANWR) is important for dimerization. 265–267 (GGR) lines the substrate pocket.

Belongs to the aerobic coproporphyrinogen-III oxidase family. As to quaternary structure, homodimer. Requires a divalent metal cation as cofactor.

The protein localises to the cytoplasm. The enzyme catalyses coproporphyrinogen III + O2 + 2 H(+) = protoporphyrinogen IX + 2 CO2 + 2 H2O. It participates in porphyrin-containing compound metabolism; protoporphyrin-IX biosynthesis; protoporphyrinogen-IX from coproporphyrinogen-III (O2 route): step 1/1. Functionally, involved in the heme biosynthesis. Catalyzes the aerobic oxidative decarboxylation of propionate groups of rings A and B of coproporphyrinogen-III to yield the vinyl groups in protoporphyrinogen-IX. The chain is Oxygen-dependent coproporphyrinogen-III oxidase from Burkholderia ambifaria (strain MC40-6).